Here is a 529-residue protein sequence, read N- to C-terminus: Peptide chain release factor 3 (529 aa).

Residues 11–280 (AKRRTFAIIS…GLVEWAPAPM (270 aa)) form the tr-type G domain. Residues 20-27 (SHPDAGKT), 88-92 (DTPGH), and 142-145 (NKLD) contribute to the GTP site.

Belongs to the TRAFAC class translation factor GTPase superfamily. Classic translation factor GTPase family. PrfC subfamily.

It localises to the cytoplasm. In terms of biological role, increases the formation of ribosomal termination complexes and stimulates activities of RF-1 and RF-2. It binds guanine nucleotides and has strong preference for UGA stop codons. It may interact directly with the ribosome. The stimulation of RF-1 and RF-2 is significantly reduced by GTP and GDP, but not by GMP. The sequence is that of Peptide chain release factor 3 from Shigella flexneri.